We begin with the raw amino-acid sequence, 314 residues long: Olfactory receptor-like protein I9 (314 aa).

The Extracellular portion of the chain corresponds to 1 to 25; sequence MTRRNQTAISQFFLLGLPFPPEYQH. The N-linked (GlcNAc...) asparagine glycan is linked to Asn5. Residues 26 to 50 traverse the membrane as a helical segment; it reads LFYALFLAMYLTTLLGNLIIIILIL. Over 51 to 57 the chain is Cytoplasmic; that stretch reads LDSHLHT. The chain crosses the membrane as a helical span at residues 58–79; it reads PMYLFLSNLSFADLCFSSVTMP. The Extracellular portion of the chain corresponds to 80–100; sequence KLLQNMQSQVPSIPYAGCLAQ. Cys97 and Cys189 are oxidised to a cystine. Residues 101 to 120 form a helical membrane-spanning segment; it reads IYFFLFFGDLGNFLLVAMAY. Residues 121–139 are Cytoplasmic-facing; the sequence is DRYVAICFPLHYMSIMSPK. Residues 140 to 158 traverse the membrane as a helical segment; that stretch reads LCVSLVVLSWVLTTFHAML. Residues 159-196 are Extracellular-facing; that stretch reads HTLLMARLSFCEDSVIPHYFCDMSTLLKVACSDTHDNE. A helical membrane pass occupies residues 197–219; the sequence is LAIFILGGPIVVLPFLLIIVSYA. Residues 220–236 are Cytoplasmic-facing; it reads RIVSSIFKVPSSQSIHK. A helical membrane pass occupies residues 237 to 260; sequence AFSTCGSHLSVVSLFYGTVIGLYL. Over 261-272 the chain is Extracellular; it reads CPSANNSTVKET. Residues 273 to 292 form a helical membrane-spanning segment; it reads VMSLMYTMVTPMLNPFIYSL. The Cytoplasmic segment spans residues 293 to 314; the sequence is RNRDIKDALEKIMCKKQIPSFL.

This sequence belongs to the G-protein coupled receptor 1 family. Olfactory epithelium.

Its subcellular location is the cell membrane. Odorant receptor. This Rattus norvegicus (Rat) protein is Olfactory receptor-like protein I9.